A 454-amino-acid polypeptide reads, in one-letter code: Protein pid-2 (454 aa).

Residues 31–61 (VQNNQKEHPPVQEIKTVSSKSKEHRVSSSRK) form a disordered region. A compositionally biased stretch (basic and acidic residues) spans 50–61 (KSKEHRVSSSRK).

In terms of assembly, may interact with pid-4, pid-5, app-1 and prmt-5. As to expression, expressed throughout the mitotic and meiotic regions of the germline and in oocytes.

It localises to the cytoplasm. Its subcellular location is the perinuclear region. The protein localises to the cytoplasmic granule. Its function is as follows. Involved in gene silencing mediated by a class of 21 nucleotide PIWI-interacting RNAs (piRNAs) that possess a uracil residue at the 5'-end (also called 21U-RNAs) and that guide the Piwi protein prg-1 to its DNA targets for silencing. Not required for the biogenesis of 21U-RNAs. May also be involved in gene silencing mediated by 22G-siRNAs (a class of 22 nucleotide endogenous small interfering RNAs (siRNAs) that possess a triphosphorylated guanine residue at the 5'-end) and 26G-siRNAs (a class of 26 nucleotide siRNAs that possess a guanine residue at the 5'-end). Required for the biogenesis of secondary and tertiary 22G-siRNAs from many loci. Specifically, promotes the production of 22G-siRNAs from the 5' end of target mRNAs. May play a role in the production of 26G-siRNAs. Plays a role in small RNA-directed transgenerational epigenetic inheritance (also called RNAe) over several generations and germline immortality. Together with the argonaut protein hrde-1, promotes the silencing of the DNA transposable element Tc1. Required for the formation of liquid-like condensates in the cytoplasm called Z granules, playing a role in maintaining their assembly, viscosity and morphology in adult germ cells, and localization in early embryos. In Caenorhabditis elegans, this protein is Protein pid-2.